Consider the following 314-residue polypeptide: tRNA pseudouridine synthase B (314 aa).

His43 is a substrate binding site. The active-site Nucleophile is Asp48. Substrate-binding residues include Tyr76, Tyr179, and Leu200.

The protein belongs to the pseudouridine synthase TruB family. Type 1 subfamily.

It carries out the reaction uridine(55) in tRNA = pseudouridine(55) in tRNA. In terms of biological role, responsible for synthesis of pseudouridine from uracil-55 in the psi GC loop of transfer RNAs. The protein is tRNA pseudouridine synthase B of Shigella boydii serotype 4 (strain Sb227).